Reading from the N-terminus, the 83-residue chain is Cell division topological specificity factor (83 aa).

Belongs to the MinE family.

Prevents the cell division inhibition by proteins MinC and MinD at internal division sites while permitting inhibition at polar sites. This ensures cell division at the proper site by restricting the formation of a division septum at the midpoint of the long axis of the cell. This Pseudoalteromonas atlantica (strain T6c / ATCC BAA-1087) protein is Cell division topological specificity factor.